The following is a 358-amino-acid chain: Plancitoxin-1 (358 aa).

The first 26 residues, 1–26 (MPSSVIMFTFLALTVLTAVMVGTSEA), serve as a signal peptide directing secretion. N-linked (GlcNAc...) asparagine glycosylation occurs at Asn274. His303 is an active-site residue.

Belongs to the DNase II family. As to quaternary structure, plancitoxin is a heterodimer of alpha and beta subunits; disulfide-linked by a single disulfide bond. Venom gland.

It localises to the secreted. It catalyses the reaction Endonucleolytic cleavage to nucleoside 3'-phosphates and 3'-phosphooligonucleotide end-products.. Functionally, hydrolyzes DNA with an optimum pH of 7.2. Is potently hepatotoxic. It induces caspase-independent apoptosis (on rat liver cells) through the following procedure: binding to a specific receptor in the cytoplasmic membrane, entering the cell, entering the nucleus and degrading DNA. The polypeptide is Plancitoxin-1 (Acanthaster planci (Crown-of-thorns starfish)).